Consider the following 329-residue polypeptide: DNA-directed RNA polymerase subunit alpha (329 aa).

Residues methionine 1–arginine 234 form an alpha N-terminal domain (alpha-NTD) region. The tract at residues phenylalanine 248–aspartate 329 is alpha C-terminal domain (alpha-CTD).

The protein belongs to the RNA polymerase alpha chain family. Homodimer. The RNAP catalytic core consists of 2 alpha, 1 beta, 1 beta' and 1 omega subunit. When a sigma factor is associated with the core the holoenzyme is formed, which can initiate transcription.

The catalysed reaction is RNA(n) + a ribonucleoside 5'-triphosphate = RNA(n+1) + diphosphate. In terms of biological role, DNA-dependent RNA polymerase catalyzes the transcription of DNA into RNA using the four ribonucleoside triphosphates as substrates. This is DNA-directed RNA polymerase subunit alpha from Pseudoalteromonas atlantica (strain T6c / ATCC BAA-1087).